The chain runs to 107 residues: Putative double-stranded DNA mimic protein PC1_1990 (107 aa).

This sequence belongs to the putative dsDNA mimic protein family.

Functionally, may act as a double-stranded DNA (dsDNA) mimic. Probably regulates the activity of a dsDNA-binding protein. The protein is Putative double-stranded DNA mimic protein PC1_1990 of Pectobacterium carotovorum subsp. carotovorum (strain PC1).